The chain runs to 308 residues: GTPase Era (308 aa).

Residues 7–181 (RCGWVALIGP…LRLIVGYMPE (175 aa)) form the Era-type G domain. Positions 15–22 (GPPNAGKS) are G1. A GTP-binding site is contributed by 15–22 (GPPNAGKS). The tract at residues 41-45 (QTTRN) is G2. A G3 region spans residues 62 to 65 (DTPG). GTP contacts are provided by residues 62–66 (DTPGI) and 130–133 (NKID). The segment at 130–133 (NKID) is G4. The interval 160–162 (ASA) is G5. A KH type-2 domain is found at 212 to 290 (LRQELPYSTA…HLELWVKVRE (79 aa)).

This sequence belongs to the TRAFAC class TrmE-Era-EngA-EngB-Septin-like GTPase superfamily. Era GTPase family. Monomer.

It localises to the cytoplasm. It is found in the cell inner membrane. In terms of biological role, an essential GTPase that binds both GDP and GTP, with rapid nucleotide exchange. Plays a role in 16S rRNA processing and 30S ribosomal subunit biogenesis and possibly also in cell cycle regulation and energy metabolism. This chain is GTPase Era, found in Nitratidesulfovibrio vulgaris (strain DP4) (Desulfovibrio vulgaris).